Consider the following 807-residue polypeptide: SWI/SNF complex subunit SWI3C (807 aa).

A disordered region spans residues 1 to 74 (MPASEDRRGK…DPGLGIGEVV (74 aa)). Over residues 28 to 54 (EEEDMEEEDEENNNNNNEEMDDVENAD) the composition is skewed to acidic residues. The region spanning 176–274 (HVLPMHSDWF…YCATAQSHPG (99 aa)) is the SWIRM domain. Residues 340–394 (LCDSHCNHCSRPLPTVYFQSQKKGDILLCCDCFHHGRFVVGHSCLDFVRVDPMKF) form a ZZ-type; degenerate zinc finger. Positions 345, 348, 368, and 371 each coordinate Zn(2+). The 52-residue stretch at 398–449 (QDGDNWTDQETLLLLEAVELYNENWVQIADHVGSKSKAQCILHFLRLPVEDG) folds into the SANT domain. Composition is skewed to polar residues over residues 458 to 467 (GVTNTENPTN) and 552 to 569 (ENQQQDGAHKTSSQNGAE). 2 disordered regions span residues 458–487 (GVTNTENPTNGYDHKGTDSNGDLPGYSEQG) and 549–571 (LDGENQQQDGAHKTSSQNGAEAQ). The stretch at 598 to 656 (ADHEEREIQRLSANIVNHQLKRMELKLKQFAEIETLLMKECEQVEKTRQRFSAERARML) forms a coiled coil. 2 stretches are compositionally biased toward low complexity: residues 692-703 (QHQQQQASATSQ) and 726-739 (QQQQQQQQQQQQQQ). Disordered regions lie at residues 692–713 (QHQQQQASATSQPSIIPGFSNN), 721–740 (HFMARQQQQQQQQQQQQQQA), and 781–807 (SINQPSFSHPMVRSSTGSGSGSGLGLN). Gly residues predominate over residues 798–807 (SGSGSGLGLN).

As to quaternary structure, heterodimer. Interacts with SWI3A, SWI3B and BRM, but not with BSH. Interacts with MORC6 and SUVH9. As to expression, expressed in roots, stems, leaves, flowers and siliques.

It localises to the nucleus. In terms of biological role, component of a multiprotein complex equivalent of the SWI/SNF complex, an ATP-dependent chromatin-remodeling complex, which is required for the positive and negative regulation of gene expression of a large number of genes. It changes chromatin structure by altering DNA-histone contacts within a nucleosome, leading eventually to a change in nucleosome position, thus facilitating or repressing binding of gene-specific transcription factors. The sequence is that of SWI/SNF complex subunit SWI3C (SWI3C) from Arabidopsis thaliana (Mouse-ear cress).